The sequence spans 993 residues: UPF0182 protein MAV_4137 (993 aa).

The next 7 membrane-spanning stretches (helical) occupy residues 18–38 (ILILIALGVIALLLAGPRLID), 63–83 (FVVFLIAGLLVGGIVFAGLAV), 113–133 (LVSIGVPVAIGLLAGIIAQSY), 175–195 (FVAVFLAFVANLLAHYIFGGI), 210–230 (IQLVTLVGLLVLLKAVAYWLD), 254–274 (AVLPAKLILMAIALICAAAVF), and 287–307 (IGLVLLLLSSLIVGAGWPLIV). The segment at 903 to 941 (NIQPTEGGAPAASPPANAPAPAVTPGSAPPVAAPPVPDG) is disordered. Positions 929 to 939 (SAPPVAAPPVP) are enriched in pro residues.

This sequence belongs to the UPF0182 family.

It localises to the cell membrane. The sequence is that of UPF0182 protein MAV_4137 from Mycobacterium avium (strain 104).